Reading from the N-terminus, the 482-residue chain is tRNA sulfurtransferase (482 aa).

One can recognise a THUMP domain in the interval 61–165 (LAIRDALTRI…DDRLLLIKGR (105 aa)). Residues 183–184 (LI), Lys265, Gly287, and Gln296 each bind ATP. Cys344 and Cys456 are joined by a disulfide. Residues 404-482 (FGPNDVILDI…GFNNVKVYRP (79 aa)) enclose the Rhodanese domain. Cys456 (cysteine persulfide intermediate) is an active-site residue.

This sequence belongs to the ThiI family.

Its subcellular location is the cytoplasm. The enzyme catalyses [ThiI sulfur-carrier protein]-S-sulfanyl-L-cysteine + a uridine in tRNA + 2 reduced [2Fe-2S]-[ferredoxin] + ATP + H(+) = [ThiI sulfur-carrier protein]-L-cysteine + a 4-thiouridine in tRNA + 2 oxidized [2Fe-2S]-[ferredoxin] + AMP + diphosphate. The catalysed reaction is [ThiS sulfur-carrier protein]-C-terminal Gly-Gly-AMP + S-sulfanyl-L-cysteinyl-[cysteine desulfurase] + AH2 = [ThiS sulfur-carrier protein]-C-terminal-Gly-aminoethanethioate + L-cysteinyl-[cysteine desulfurase] + A + AMP + 2 H(+). It participates in cofactor biosynthesis; thiamine diphosphate biosynthesis. Catalyzes the ATP-dependent transfer of a sulfur to tRNA to produce 4-thiouridine in position 8 of tRNAs, which functions as a near-UV photosensor. Also catalyzes the transfer of sulfur to the sulfur carrier protein ThiS, forming ThiS-thiocarboxylate. This is a step in the synthesis of thiazole, in the thiamine biosynthesis pathway. The sulfur is donated as persulfide by IscS. This chain is tRNA sulfurtransferase, found in Escherichia coli (strain ATCC 8739 / DSM 1576 / NBRC 3972 / NCIMB 8545 / WDCM 00012 / Crooks).